The following is a 364-amino-acid chain: tRNA 2-selenouridine synthase (364 aa).

Residues 14–137 (LLADTPLIDV…LRQTAIQATW (124 aa)) enclose the Rhodanese domain. Catalysis depends on cysteine 97, which acts as the S-selanylcysteine intermediate. Glycine 149 lines the (2E)-geranyl diphosphate pocket.

Belongs to the SelU family. As to quaternary structure, monomer.

The enzyme catalyses 5-methylaminomethyl-2-thiouridine(34) in tRNA + selenophosphate + (2E)-geranyl diphosphate + H2O + H(+) = 5-methylaminomethyl-2-selenouridine(34) in tRNA + (2E)-thiogeraniol + phosphate + diphosphate. The catalysed reaction is 5-methylaminomethyl-2-thiouridine(34) in tRNA + (2E)-geranyl diphosphate = 5-methylaminomethyl-S-(2E)-geranyl-thiouridine(34) in tRNA + diphosphate. It carries out the reaction 5-methylaminomethyl-S-(2E)-geranyl-thiouridine(34) in tRNA + selenophosphate + H(+) = 5-methylaminomethyl-2-(Se-phospho)selenouridine(34) in tRNA + (2E)-thiogeraniol. It catalyses the reaction 5-methylaminomethyl-2-(Se-phospho)selenouridine(34) in tRNA + H2O = 5-methylaminomethyl-2-selenouridine(34) in tRNA + phosphate. In terms of biological role, involved in the post-transcriptional modification of the uridine at the wobble position (U34) of tRNA(Lys), tRNA(Glu) and tRNA(Gln). Catalyzes the conversion of 2-thiouridine (S2U-RNA) to 2-selenouridine (Se2U-RNA). Acts in a two-step process involving geranylation of 2-thiouridine (S2U) to S-geranyl-2-thiouridine (geS2U) and subsequent selenation of the latter derivative to 2-selenouridine (Se2U) in the tRNA chain. The protein is tRNA 2-selenouridine synthase of Salmonella typhimurium (strain LT2 / SGSC1412 / ATCC 700720).